The sequence spans 203 residues: ATP-dependent Clp protease proteolytic subunit (203 aa).

The Nucleophile role is filled by serine 107. Histidine 132 is a catalytic residue.

This sequence belongs to the peptidase S14 family. As to quaternary structure, fourteen ClpP subunits assemble into 2 heptameric rings which stack back to back to give a disk-like structure with a central cavity, resembling the structure of eukaryotic proteasomes.

The protein localises to the cytoplasm. It catalyses the reaction Hydrolysis of proteins to small peptides in the presence of ATP and magnesium. alpha-casein is the usual test substrate. In the absence of ATP, only oligopeptides shorter than five residues are hydrolyzed (such as succinyl-Leu-Tyr-|-NHMec, and Leu-Tyr-Leu-|-Tyr-Trp, in which cleavage of the -Tyr-|-Leu- and -Tyr-|-Trp bonds also occurs).. Its function is as follows. Cleaves peptides in various proteins in a process that requires ATP hydrolysis. Has a chymotrypsin-like activity. Plays a major role in the degradation of misfolded proteins. In Shewanella denitrificans (strain OS217 / ATCC BAA-1090 / DSM 15013), this protein is ATP-dependent Clp protease proteolytic subunit.